The chain runs to 569 residues: Ferredoxin--nitrite reductase, chloroplastic (569 aa).

The N-terminal 4 residues, 1-4, are a transit peptide targeting the chloroplast; it reads IPGR. Positions 1-28 are disordered; that stretch reads IPGRTGRARAAVSVPPPAGEQVPTERLE. [4Fe-4S] cluster-binding residues include Cys-447, Cys-453, Cys-488, and Cys-492. Cys-492 contacts siroheme.

Belongs to the nitrite and sulfite reductase 4Fe-4S domain family. In terms of assembly, monomer. Siroheme serves as cofactor. [4Fe-4S] cluster is required as a cofactor.

It localises to the plastid. Its subcellular location is the chloroplast. It carries out the reaction 6 oxidized [2Fe-2S]-[ferredoxin] + NH4(+) + 2 H2O = nitrite + 6 reduced [2Fe-2S]-[ferredoxin] + 8 H(+). The protein operates within nitrogen metabolism; nitrate reduction (assimilation). This Zea mays (Maize) protein is Ferredoxin--nitrite reductase, chloroplastic (NIR).